Here is a 119-residue protein sequence, read N- to C-terminus: Toxin ICK-9 (119 aa).

The first 19 residues, 1–19 (MMKLYSLVIIATLAAAAFA), serve as a signal peptide directing secretion. Intrachain disulfides connect cysteine 59–cysteine 74, cysteine 67–cysteine 80, cysteine 71–cysteine 116, and cysteine 73–cysteine 87.

It belongs to the neurotoxin 25 family. ICK-8 subfamily. In terms of tissue distribution, expressed by the venom gland.

The protein resides in the secreted. Ion channel inhibitor. The protein is Toxin ICK-9 of Trittame loki (Brush-footed trapdoor spider).